The primary structure comprises 306 residues: UDP-N-acetylenolpyruvoylglucosamine reductase (306 aa).

The FAD-binding PCMH-type domain occupies 25-188; it reads RVGGPADWLF…IEARFRAEPG (164 aa). Arg168 is an active-site residue. Basic and acidic residues predominate over residues 199–214; it reads EQLARRDASQPTKDRS. A disordered region spans residues 199–232; sequence EQLARRDASQPTKDRSAGSTFRNPAGYSSTGRAD. Polar residues predominate over residues 215 to 229; it reads AGSTFRNPAGYSSTG. Residue Ser217 is the Proton donor of the active site. Glu299 is an active-site residue.

The protein belongs to the MurB family. FAD serves as cofactor.

The protein resides in the cytoplasm. The enzyme catalyses UDP-N-acetyl-alpha-D-muramate + NADP(+) = UDP-N-acetyl-3-O-(1-carboxyvinyl)-alpha-D-glucosamine + NADPH + H(+). The protein operates within cell wall biogenesis; peptidoglycan biosynthesis. In terms of biological role, cell wall formation. This chain is UDP-N-acetylenolpyruvoylglucosamine reductase, found in Paracoccus denitrificans (strain Pd 1222).